Consider the following 71-residue polypeptide: Protein SlyX homolog (71 aa).

It belongs to the SlyX family.

This is Protein SlyX homolog from Stutzerimonas stutzeri (strain A1501) (Pseudomonas stutzeri).